The following is a 446-amino-acid chain: Glutamine synthetase (446 aa).

Positions 14 to 106 constitute a GS beta-grasp domain; it reads NNVKFIRFQF…VICDVYTTNG (93 aa). The region spanning 113–446 is the GS catalytic domain; that stretch reads PRGCLKRVLA…DWETKQYLKI (334 aa). Mg(2+) contacts are provided by Glu137 and Glu139. Glu187 contacts ATP. Mg(2+) is bound by residues Glu192 and Glu199. L-glutamate is bound by residues 243–244 and Gly244; that span reads NG. His248 is a Mg(2+) binding site. ATP-binding positions include 250–252 and Ser252; that span reads HQS. L-glutamate is bound by residues Arg301, Glu307, and Arg319. Residues Arg319, Arg324, and Lys331 each coordinate ATP. A Mg(2+)-binding site is contributed by Glu336. Residue Arg338 participates in L-glutamate binding.

It belongs to the glutamine synthetase family. As to quaternary structure, oligomer of 12 subunits arranged in the form of two hexagons. Requires Mg(2+) as cofactor.

The protein localises to the cytoplasm. The catalysed reaction is L-glutamate + NH4(+) + ATP = L-glutamine + ADP + phosphate + H(+). Probably involved in nitrogen metabolism via ammonium assimilation. Catalyzes the ATP-dependent biosynthesis of glutamine from glutamate and ammonia. This Methanococcus maripaludis (strain DSM 14266 / JCM 13030 / NBRC 101832 / S2 / LL) protein is Glutamine synthetase.